The primary structure comprises 338 residues: Aspartate carbamoyltransferase catalytic subunit (338 aa).

2 residues coordinate carbamoyl phosphate: Arg-72 and Thr-73. Lys-100 serves as a coordination point for L-aspartate. The carbamoyl phosphate site is built by Arg-122, His-152, and Gln-155. Positions 186 and 243 each coordinate L-aspartate. Carbamoyl phosphate is bound by residues Gly-284 and Pro-285.

The protein belongs to the aspartate/ornithine carbamoyltransferase superfamily. ATCase family. In terms of assembly, heterododecamer (2C3:3R2) of six catalytic PyrB chains organized as two trimers (C3), and six regulatory PyrI chains organized as three dimers (R2).

The enzyme catalyses carbamoyl phosphate + L-aspartate = N-carbamoyl-L-aspartate + phosphate + H(+). It participates in pyrimidine metabolism; UMP biosynthesis via de novo pathway; (S)-dihydroorotate from bicarbonate: step 2/3. In terms of biological role, catalyzes the condensation of carbamoyl phosphate and aspartate to form carbamoyl aspartate and inorganic phosphate, the committed step in the de novo pyrimidine nucleotide biosynthesis pathway. This chain is Aspartate carbamoyltransferase catalytic subunit, found in Acinetobacter baumannii (strain ACICU).